The sequence spans 350 residues: Ferrochelatase (350 aa).

H220 and E301 together coordinate Fe cation.

The protein belongs to the ferrochelatase family.

It localises to the cytoplasm. The catalysed reaction is heme b + 2 H(+) = protoporphyrin IX + Fe(2+). It participates in porphyrin-containing compound metabolism; protoheme biosynthesis; protoheme from protoporphyrin-IX: step 1/1. Functionally, catalyzes the ferrous insertion into protoporphyrin IX. This is Ferrochelatase from Brucella anthropi (strain ATCC 49188 / DSM 6882 / CCUG 24695 / JCM 21032 / LMG 3331 / NBRC 15819 / NCTC 12168 / Alc 37) (Ochrobactrum anthropi).